The chain runs to 128 residues: Ribonuclease P protein component (128 aa).

Belongs to the RnpA family. Consists of a catalytic RNA component (M1 or rnpB) and a protein subunit.

The catalysed reaction is Endonucleolytic cleavage of RNA, removing 5'-extranucleotides from tRNA precursor.. Functionally, RNaseP catalyzes the removal of the 5'-leader sequence from pre-tRNA to produce the mature 5'-terminus. It can also cleave other RNA substrates such as 4.5S RNA. The protein component plays an auxiliary but essential role in vivo by binding to the 5'-leader sequence and broadening the substrate specificity of the ribozyme. The sequence is that of Ribonuclease P protein component from Prochlorococcus marinus (strain AS9601).